The following is a 138-amino-acid chain: Large ribosomal subunit protein uL16 (138 aa).

Belongs to the universal ribosomal protein uL16 family. As to quaternary structure, part of the 50S ribosomal subunit.

In terms of biological role, binds 23S rRNA and is also seen to make contacts with the A and possibly P site tRNAs. This chain is Large ribosomal subunit protein uL16, found in Ureaplasma parvum serovar 3 (strain ATCC 27815 / 27 / NCTC 11736).